The sequence spans 143 residues: Large ribosomal subunit protein uL11 (143 aa).

Belongs to the universal ribosomal protein uL11 family. Part of the ribosomal stalk of the 50S ribosomal subunit. Interacts with L10 and the large rRNA to form the base of the stalk. L10 forms an elongated spine to which L12 dimers bind in a sequential fashion forming a multimeric L10(L12)X complex. Post-translationally, one or more lysine residues are methylated.

Functionally, forms part of the ribosomal stalk which helps the ribosome interact with GTP-bound translation factors. In Azoarcus sp. (strain BH72), this protein is Large ribosomal subunit protein uL11.